A 405-amino-acid chain; its full sequence is Multi-drug resistance efflux pump PmrA homolog (405 aa).

The next 12 helical transmembrane spans lie at 13–33, 50–70, 88–108, 111–131, 147–167, 170–190, 216–236, 254–274, 286–306, 308–328, 350–370, and 374–394; these read LFIT…VMPF, LYSG…APIW, IVMT…WLLG, LLMG…ASQA, MVSG…WFGM, VFLI…FFVH, ILFG…SIEP, FISG…SSFL, LILI…FVQS, LQLG…TPSV, MCSN…AGYI, and AAIV…FINF.

Belongs to the major facilitator superfamily. TCR/Tet family.

It is found in the cell membrane. Efflux pump for various substrates. This chain is Multi-drug resistance efflux pump PmrA homolog (pmrA), found in Lactococcus lactis subsp. lactis (strain IL1403) (Streptococcus lactis).